The chain runs to 344 residues: Phenylalanine--tRNA ligase alpha subunit (344 aa).

Residue E256 coordinates Mg(2+).

This sequence belongs to the class-II aminoacyl-tRNA synthetase family. Phe-tRNA synthetase alpha subunit type 1 subfamily. In terms of assembly, tetramer of two alpha and two beta subunits. Requires Mg(2+) as cofactor.

The protein localises to the cytoplasm. The enzyme catalyses tRNA(Phe) + L-phenylalanine + ATP = L-phenylalanyl-tRNA(Phe) + AMP + diphosphate + H(+). The sequence is that of Phenylalanine--tRNA ligase alpha subunit (pheS) from Bacillus subtilis (strain 168).